The primary structure comprises 254 residues: HTH-type transcriptional regulator GlvR (254 aa).

The HTH rpiR-type domain maps to 1–77 (MQLEELINQH…VFLKWEDQPE (77 aa)). Residues 37–56 (IDALAKACSVSRSSILRLAQ) constitute a DNA-binding region (H-T-H motif). The SIS domain maps to 106–248 (MCQLIDAADR…FRAYVDYKEA (143 aa)).

Its function is as follows. Positive regulator of the glv operon expression, which consists of GlvA, GlvR and GlvC. The sequence is that of HTH-type transcriptional regulator GlvR (glvR) from Bacillus subtilis (strain 168).